The chain runs to 486 residues: Keratin, type II cuticular Hb6 (486 aa).

Residues 1–106 form a head region; it reads MTCGSYCGGR…PNAQCVKHEE (106 aa). An IF rod domain is found at 106–417; that stretch reads EKEQIKCLNS…RLLEGEEQRL (312 aa). A coil 1A region spans residues 107-141; sequence KEQIKCLNSKFAAFIDKVRFLEQQNKLLETKWQFY. The linker 1 stretch occupies residues 142 to 151; sequence QNRKCCESNM. The coil 1B stretch occupies residues 152 to 252; the sequence is EPLFEGYIEA…YDEETRILHS (101 aa). Residue Lys-212 forms a Glycyl lysine isopeptide (Lys-Gly) (interchain with G-Cter in SUMO1) linkage. The interval 253–269 is linker 12; that stretch reads HISDTSIVVKMDNSRDL. Residues 270–413 are coil 2; it reads NMDCVVAEIK…TTYRRLLEGE (144 aa). The segment at 414-486 is tail; the sequence is EQRLCEGVGS…GACSGGCKKC (73 aa).

Belongs to the intermediate filament family. Heterotetramer of two type I and two type II keratins.

The polypeptide is Keratin, type II cuticular Hb6 (Krt86) (Mus musculus (Mouse)).